Consider the following 192-residue polypeptide: MYQELIRNELTEAASVLQAFLADEQNLKDIEAAAKLLADSFKQEGKVLSCGNGGSHCDAMHFAEELTGRYRENRPGYAGIAISDPSHLSCVSNDFGYDYVFSRYVEAVGRRGDVLLGISTSGNSGNILKAIEAAHAKGMKVIALTGKDGGKMAGLADVEIRVPHFGYADRIQEVHIKVIHILIQLVEKEMAK.

The region spanning 37–192 (LADSFKQEGK…IQLVEKEMAK (156 aa)) is the SIS domain. 52-54 (NGG) contacts substrate. Zn(2+) is bound by residues histidine 61 and glutamate 65. Substrate-binding positions include glutamate 65, 93 to 94 (ND), 119 to 121 (STS), serine 124, and glutamine 172. Zn(2+)-binding residues include glutamine 172 and histidine 180.

The protein belongs to the SIS family. GmhA subfamily. In terms of assembly, homotetramer. The cofactor is Zn(2+).

It localises to the cytoplasm. It catalyses the reaction 2 D-sedoheptulose 7-phosphate = D-glycero-alpha-D-manno-heptose 7-phosphate + D-glycero-beta-D-manno-heptose 7-phosphate. Its pathway is carbohydrate biosynthesis; D-glycero-D-manno-heptose 7-phosphate biosynthesis; D-glycero-alpha-D-manno-heptose 7-phosphate and D-glycero-beta-D-manno-heptose 7-phosphate from sedoheptulose 7-phosphate: step 1/1. Its function is as follows. Catalyzes the isomerization of sedoheptulose 7-phosphate in D-glycero-D-manno-heptose 7-phosphate. This chain is Phosphoheptose isomerase, found in Aeromonas hydrophila subsp. hydrophila (strain ATCC 7966 / DSM 30187 / BCRC 13018 / CCUG 14551 / JCM 1027 / KCTC 2358 / NCIMB 9240 / NCTC 8049).